Reading from the N-terminus, the 763-residue chain is G protein-regulated inducer of neurite outgrowth 3 (763 aa).

Disordered regions lie at residues 1–48 (MGTV…IGNV), 65–111 (QACV…APGL), and 192–268 (ENSQ…GATC). Over residues 27 to 44 (ESQSVSPQPAQPDNNASG) the composition is skewed to polar residues. The segment covering 93-104 (KTPDDFLLHGSK) has biased composition (basic and acidic residues). A compositionally biased stretch (polar residues) spans 237-250 (ENKQPSATALNTTA). Ser-323 and Ser-359 each carry phosphoserine. Disordered regions lie at residues 420–452 (TSSQ…PDFQ), 471–624 (NQGL…PRRG), and 711–737 (VKTQ…GRQH). A compositionally biased stretch (polar residues) spans 437–450 (KEATSRQPEGTNPD). 2 stretches are compositionally biased toward basic and acidic residues: residues 480–496 (REPE…KAES) and 518–539 (PTDK…KDHA). The segment covering 593–609 (SLSLPSDGTGDSSPGSG) has biased composition (low complexity).

In terms of biological role, may be involved in neurite outgrowth. The polypeptide is G protein-regulated inducer of neurite outgrowth 3 (Gprin3) (Mus musculus (Mouse)).